The chain runs to 314 residues: Taste receptor type 2 member 42 (314 aa).

At 1-7 (MATELDK) the chain is on the extracellular side. Residues 8-28 (IFLTLAIVEFIIGMLGNVFIG) form a helical membrane-spanning segment. Residues 29–50 (LANCSEGIKNQKVFSVDFILTC) are Cytoplasmic-facing. A helical transmembrane segment spans residues 51–71 (LAISTIGHLLVILFDSHVAGL). The Extracellular segment spans residues 72–101 (APHLYATDRVVRPVTVLWHMTNHLTTWLAT). The helical transmembrane segment at 102-122 (CLSIFYFFKIAHFPHSLFLWL) threads the bilayer. Topologically, residues 123 to 127 (RWRMN) are cytoplasmic. The chain crosses the membrane as a helical span at residues 128–148 (RVIAILLTLSLFLLIFDCLVL). At 149–187 (EMFIDISLNIIDKSNLTLYLDESKTPYDKLFLLKTLLSL) the chain is on the extracellular side. Asparagine 163 carries N-linked (GlcNAc...) asparagine glycosylation. Residues 188 to 208 (NSFIPFSLCLTSLLFLFLSLV) traverse the membrane as a helical segment. The Cytoplasmic portion of the chain corresponds to 209-238 (RHTRNLKLSSLGSRDSSTEAHRRAMKMVMS). Residues 239–259 (FLFLFIVHFFSLQVANWTFCI) traverse the membrane as a helical segment. Over 260 to 265 (LGNNKY) the chain is Extracellular. A helical membrane pass occupies residues 266-286 (TQFVMLALHAFPSCHSFILIL). Over 287–314 (GNSKLRQTAVRLLWHLRNYTKRPNPLPL) the chain is Cytoplasmic.

The protein belongs to the G-protein coupled receptor T2R family.

It is found in the membrane. Its function is as follows. Receptor that may play a role in the perception of bitterness and is gustducin-linked. May play a role in sensing the chemical composition of the gastrointestinal content. The activity of this receptor may stimulate alpha gustducin, mediate PLC-beta-2 activation and lead to the gating of TRPM5. This Papio hamadryas (Hamadryas baboon) protein is Taste receptor type 2 member 42 (TAS2R42).